Here is a 268-residue protein sequence, read N- to C-terminus: Chymotrypsin-C (268 aa).

The signal sequence occupies residues 1 to 16 (MLGITVFTTFLAYASS). A propeptide spans 17 to 29 (CGAPIFQPNLSAR) (activation peptide). Cystine bridges form between Cys-17–Cys-141, Cys-59–Cys-75, Cys-155–Cys-222, Cys-186–Cys-202, and Cys-212–Cys-243. Asn-25 is a glycosylation site (N-linked (GlcNAc...) asparagine). The Peptidase S1 domain occupies 30-268 (VVGGEDAIPH…IDWINQKLQL (239 aa)). Catalysis depends on charge relay system residues His-74 and Asp-121. Ser-216 functions as the Charge relay system in the catalytic mechanism.

This sequence belongs to the peptidase S1 family. Elastase subfamily. Monomer. The zymogen is secreted as a ternary complex composed of procarboxypeptidase A, chymotrypsinogen C and proproteinase E. In terms of tissue distribution, pancreas.

It localises to the secreted. The protein localises to the extracellular space. It carries out the reaction Preferential cleavage: Leu-|-Xaa, Tyr-|-Xaa, Phe-|-Xaa, Met-|-Xaa, Trp-|-Xaa, Gln-|-Xaa, Asn-|-Xaa.. Functionally, regulates activation and degradation of trypsinogens and procarboxypeptidases by targeting specific cleavage sites within their zymogen precursors. Has chymotrypsin-type protease activity and hypocalcemic activity. The polypeptide is Chymotrypsin-C (CTRC) (Bos taurus (Bovine)).